The primary structure comprises 1589 residues: Mediator of RNA polymerase II transcription subunit 23 (1589 aa).

Residues 1381–1499 (YVSQNEPAPP…PPTPAPMHHQ (119 aa)) are disordered. The segment covering 1392-1410 (TPEREKTPERKDQQKEQQE) has biased composition (basic and acidic residues). The span at 1457–1470 (LHHQQQQQQHLSQM) shows a compositional bias: low complexity.

Belongs to the Mediator complex subunit 23 family. As to quaternary structure, component of the Mediator complex.

The protein resides in the nucleus. Component of the Mediator complex, a coactivator involved in the regulated transcription of nearly all RNA polymerase II-dependent genes. Mediator functions as a bridge to convey information from gene-specific regulatory proteins to the basal RNA polymerase II transcription machinery. Mediator is recruited to promoters by direct interactions with regulatory proteins and serves as a scaffold for the assembly of a functional preinitiation complex with RNA polymerase II and the general transcription factors. In Caenorhabditis briggsae, this protein is Mediator of RNA polymerase II transcription subunit 23 (sur-2).